Reading from the N-terminus, the 291-residue chain is Ribonuclease Z (291 aa).

Zn(2+) contacts are provided by His-61, His-63, Asp-65, His-66, His-133, Asp-201, and His-257. Asp-65 (proton acceptor) is an active-site residue.

The protein belongs to the RNase Z family. As to quaternary structure, homodimer. The cofactor is Zn(2+).

It catalyses the reaction Endonucleolytic cleavage of RNA, removing extra 3' nucleotides from tRNA precursor, generating 3' termini of tRNAs. A 3'-hydroxy group is left at the tRNA terminus and a 5'-phosphoryl group is left at the trailer molecule.. Functionally, zinc phosphodiesterase, which displays some tRNA 3'-processing endonuclease activity. Probably involved in tRNA maturation, by removing a 3'-trailer from precursor tRNA. This Saccharolobus islandicus (strain L.S.2.15 / Lassen #1) (Sulfolobus islandicus) protein is Ribonuclease Z.